A 489-amino-acid chain; its full sequence is 5'-AMP-activated protein kinase subunit gamma-3 (489 aa).

The disordered stretch occupies residues 1–95 (MEPELEHTLP…TRQEATFPKA (95 aa)). A compositionally biased stretch (polar residues) spans 32-47 (GENSWPSPAVATSSER). 3 consecutive CBS domains span residues 197 to 258 (MATS…RSPL), 280 to 340 (CFKP…LLPR), and 355 to 415 (TFRD…HLDM). ADP is bound by residues Arg-225, 240–245 (MLTITD), Val-285, 306–307 (HR), and Lys-325. Residues Arg-225, 240–245 (MLTITD), Val-285, His-306, 306–307 (HR), Lys-325, Thr-355, Ala-360, 381–382 (SA), 397–400 (SRFD), Arg-424, Leu-432, His-453, 453–454 (HR), and 469–472 (SLSD) each bind AMP. Residues Arg-225, 240 to 245 (MLTITD), Val-285, 306 to 307 (HR), Arg-307, and Lys-325 contribute to the ATP site. Residues 293-314 (LFEAVYALIKNRIHRLPVLDPV) carry the AMPK pseudosubstrate motif. ADP contacts are provided by residues 397 to 400 (SRFD), Arg-424, Leu-432, and 453 to 454 (HR). ATP-binding positions include 397-400 (SRFD), Arg-424, Leu-432, and 453-454 (HR). The CBS 4 domain maps to 427 to 486 (CLEGVLSCQPHESLGEVIDRIAREQVHRLVLVDETQHLLGVVSLSDILQALVLSPAGIDA).

It belongs to the 5'-AMP-activated protein kinase gamma subunit family. AMPK is a heterotrimer of an alpha catalytic subunit (PRKAA1 or PRKAA2), a beta (PRKAB1 or PRKAB2) and a gamma non-catalytic subunits (PRKAG1, PRKAG2 or PRKAG3). Interacts with FNIP1 and FNIP2. Phosphorylated by ULK1; leading to negatively regulate AMPK activity and suggesting the existence of a regulatory feedback loop between ULK1 and AMPK. Post-translationally, glycosylated; O-GlcNAcylated by OGT, promoting the AMP-activated protein kinase (AMPK) activity.

In terms of biological role, AMP/ATP-binding subunit of AMP-activated protein kinase (AMPK), an energy sensor protein kinase that plays a key role in regulating cellular energy metabolism. In response to reduction of intracellular ATP levels, AMPK activates energy-producing pathways and inhibits energy-consuming processes: inhibits protein, carbohydrate and lipid biosynthesis, as well as cell growth and proliferation. AMPK acts via direct phosphorylation of metabolic enzymes, and by longer-term effects via phosphorylation of transcription regulators. AMPK also acts as a regulator of cellular polarity by remodeling the actin cytoskeleton; probably by indirectly activating myosin. The AMPK gamma3 subunit is a non-catalytic subunit with a regulatory role in muscle energy metabolism. It mediates binding to AMP, ADP and ATP, leading to AMPK activation or inhibition: AMP-binding results in allosteric activation of alpha catalytic subunit (PRKAA1 or PRKAA2) both by inducing phosphorylation and preventing dephosphorylation of catalytic subunits. ADP also stimulates phosphorylation, without stimulating already phosphorylated catalytic subunit. ATP promotes dephosphorylation of catalytic subunit, rendering the AMPK enzyme inactive. This Mus musculus (Mouse) protein is 5'-AMP-activated protein kinase subunit gamma-3 (Prkag3).